The primary structure comprises 157 residues: MLIGFGYDVHRLVPGRPLVLGGVEIPSKRGLEGHSDADVALHALMDALLGAAGLGDIGTHFPPTDPAWAGANSLDLLRRVVGLLAEEGYRPVNCDITVVAERPKIGPYVPAMRERIGAVLGVEPRRVSIKATTNEQMGFVGREEGIAAYAVALIAGR.

Residues Asp8 and His10 each contribute to the a divalent metal cation site. 4-CDP-2-C-methyl-D-erythritol 2-phosphate-binding positions include 8–10 and 34–35; these read DVH and HS. His42 provides a ligand contact to a divalent metal cation. Residues 56-58, 132-135, Phe139, and Arg142 contribute to the 4-CDP-2-C-methyl-D-erythritol 2-phosphate site; these read DIG and TTNE.

This sequence belongs to the IspF family. In terms of assembly, homotrimer. It depends on a divalent metal cation as a cofactor.

It carries out the reaction 4-CDP-2-C-methyl-D-erythritol 2-phosphate = 2-C-methyl-D-erythritol 2,4-cyclic diphosphate + CMP. Its pathway is isoprenoid biosynthesis; isopentenyl diphosphate biosynthesis via DXP pathway; isopentenyl diphosphate from 1-deoxy-D-xylulose 5-phosphate: step 4/6. Its function is as follows. Involved in the biosynthesis of isopentenyl diphosphate (IPP) and dimethylallyl diphosphate (DMAPP), two major building blocks of isoprenoid compounds. Catalyzes the conversion of 4-diphosphocytidyl-2-C-methyl-D-erythritol 2-phosphate (CDP-ME2P) to 2-C-methyl-D-erythritol 2,4-cyclodiphosphate (ME-CPP) with a corresponding release of cytidine 5-monophosphate (CMP). The chain is 2-C-methyl-D-erythritol 2,4-cyclodiphosphate synthase from Symbiobacterium thermophilum (strain DSM 24528 / JCM 14929 / IAM 14863 / T).